A 417-amino-acid chain; its full sequence is Serine hydroxymethyltransferase (417 aa).

Residues Leu-121 and 125–127 each bind (6S)-5,6,7,8-tetrahydrofolate; that span reads GHL. N6-(pyridoxal phosphate)lysine is present on Lys-229. A (6S)-5,6,7,8-tetrahydrofolate-binding site is contributed by 355-357; the sequence is SPF.

It belongs to the SHMT family. In terms of assembly, homodimer. It depends on pyridoxal 5'-phosphate as a cofactor.

Its subcellular location is the cytoplasm. The catalysed reaction is (6R)-5,10-methylene-5,6,7,8-tetrahydrofolate + glycine + H2O = (6S)-5,6,7,8-tetrahydrofolate + L-serine. The protein operates within one-carbon metabolism; tetrahydrofolate interconversion. It participates in amino-acid biosynthesis; glycine biosynthesis; glycine from L-serine: step 1/1. Catalyzes the reversible interconversion of serine and glycine with tetrahydrofolate (THF) serving as the one-carbon carrier. This reaction serves as the major source of one-carbon groups required for the biosynthesis of purines, thymidylate, methionine, and other important biomolecules. Also exhibits THF-independent aldolase activity toward beta-hydroxyamino acids, producing glycine and aldehydes, via a retro-aldol mechanism. This chain is Serine hydroxymethyltransferase, found in Buchnera aphidicola subsp. Schizaphis graminum (strain Sg).